The chain runs to 847 residues: B-cell receptor CD22 (847 aa).

The N-terminal stretch at 1-19 (MHLLGPWLLLLVLEYLAFC) is a signal peptide. The Ig-like V-type domain occupies 20–138 (DSSKWAFEHP…MERIHLNVSE (119 aa)). The Extracellular portion of the chain corresponds to 20 to 687 (DSSKWAFEHP…YYSPETIGRR (668 aa)). N-linked (GlcNAc...) asparagine glycans are attached at residues N67, N101, and N112. R120 contacts N-acetylneuraminate. N-linked (GlcNAc...) asparagine glycosylation is found at N135, N164, N231, N295, N363, N428, N445, N448, and N479. Ig-like C2-type domains lie at 143-235 (PHIQ…DTVQ), 242-324 (PKLE…AEVF), 331-416 (PEPS…LDVQ), 419-500 (PKKV…VALN), 505-582 (PRDV…QTAS), and 593-676 (PRRL…STLN). C161 and C219 are joined by a disulfide. Cystine bridges form between C265–C309 and C353–C396. 2 cysteine pairs are disulfide-bonded: C442–C484 and C529–C571. N-linked (GlcNAc...) asparagine glycosylation is found at N574 and N634. An intrachain disulfide couples C616 to C659. A helical transmembrane segment spans residues 688-708 (VAVGLGSCLAILILAICGLKL). The Cytoplasmic segment spans residues 709–847 (QRRWKRTQSQ…ENVDYVILKH (139 aa)). S725, S726, and S729 each carry phosphoserine. Short sequence motifs (ITIM motif) lie at residues 760–765 (ISYTTL) and 794–799 (VTYSVL). Y762 is modified (phosphotyrosine). 3 positions are modified to phosphotyrosine: Y807, Y822, and Y842. 2 short sequence motifs (ITIM motif) span residues 820–825 (IHYSEL) and 840–845 (VDYVIL).

This sequence belongs to the immunoglobulin superfamily. SIGLEC (sialic acid binding Ig-like lectin) family. Predominantly monomer of isoform CD22-beta. Also found as heterodimer of isoform CD22-beta and a shorter isoform. Interacts with PTPN6/SHP-1, LYN, SYK, PIK3R1/PIK3R2 and PLCG1 upon phosphorylation. Interacts with GRB2, INPP5D and SHC1 upon phosphorylation. May form a complex with INPP5D/SHIP, GRB2 and SHC1. In terms of processing, phosphorylation of Tyr-762, Tyr-807 and Tyr-822 are involved in binding to SYK, GRB2 and SYK, respectively. Phosphorylation of Tyr-842 is involved in binding to SYK, PLCG2 and PIK3R1/PIK3R2. Phosphorylated on tyrosine residues by LYN.

It localises to the cell membrane. Functionally, most highly expressed siglec (sialic acid-binding immunoglobulin-like lectin) on B-cells that plays a role in various aspects of B-cell biology including differentiation, antigen presentation, and trafficking to bone marrow. Binds to alpha 2,6-linked sialic acid residues of surface molecules such as CD22 itself, CD45 and IgM in a cis configuration. Can also bind to ligands on other cells as an adhesion molecule in a trans configuration. Acts as an inhibitory coreceptor on the surface of B-cells and inhibits B-cell receptor induced signaling, characterized by inhibition of the calcium mobilization and cellular activation. Mechanistically, the immunoreceptor tyrosine-based inhibitory motif domain is phosphorylated by the Src kinase LYN, which in turn leads to the recruitment of the protein tyrosine phosphatase 1/PTPN6, leading to the negative regulation of BCR signaling. If this negative signaling from is of sufficient strength, apoptosis of the B-cell can be induced. This chain is B-cell receptor CD22, found in Gorilla gorilla gorilla (Western lowland gorilla).